The chain runs to 211 residues: Metalloproteinase inhibitor 3 (211 aa).

The signal sequence occupies residues 1–23 (MTPWLGLVVLLSCWSLGHWGTEA). Cysteine 24 is a Zn(2+) binding site. 2 involved in metalloproteinase-binding regions span residues 24–27 (CTCS) and 88–89 (ES). Disulfide bonds link cysteine 24-cysteine 91, cysteine 26-cysteine 118, cysteine 36-cysteine 143, cysteine 145-cysteine 192, cysteine 150-cysteine 155, and cysteine 163-cysteine 184. An NTR domain is found at 24-143 (CTCSPSHPQD…GLNYRYHLGC (120 aa)). The segment at 105 to 188 (TGRVYEGKMY…SKHYACIRQK (84 aa)) is mediates interaction with EFEMP1.

The protein belongs to the protease inhibitor I35 (TIMP) family. As to quaternary structure, interacts with EFEMP1. Interacts with KDR.

It localises to the secreted. It is found in the extracellular space. The protein localises to the extracellular matrix. Mediates a variety of processes including matrix regulation and turnover, inflammation, and angiogenesis, through reversible inhibition of zinc protease superfamily enzymes, primarily matrix metalloproteinases (MMPs). Regulates extracellular matrix (ECM) remodeling through inhibition of matrix metalloproteinases (MMP) including MMP-1, MMP-2, MMP-3, MMP-7, MMP-9, MMP-13, MMP-14 and MMP-15. Additionally, modulates the processing of amyloid precursor protein (APP) and apolipoprotein E receptor ApoER2 by inhibiting two alpha-secretases ADAM10 and ADAM17. Functions as a tumor suppressor and a potent inhibitor of angiogenesis. Exerts its anti-angiogenic effect by directly interacting with vascular endothelial growth factor (VEGF) receptor-2/KDR, preventing its binding to the VEGFA ligand. Selectively induces apoptosis in angiogenic endothelial cells through a caspase-independent cell death pathway. Mechanistically, inhibits matrix-induced focal adhesion kinase PTK2 tyrosine phosphorylation and association with paxillin/PXN and disrupts the incorporation of ITGB3, PTK2 and PXN into focal adhesion contacts on the matrix. This is Metalloproteinase inhibitor 3 (Timp3) from Rattus norvegicus (Rat).